The following is a 484-amino-acid chain: MHHYPIFLKLHGCRCLVVGGGEAAARRAGDLLRAGARVELIAPVLAAPCEQLLDTSPGELHHRAEPFAAGMEEGAALVVGASGDEATDRTVYEACRARGIPVNVAGRPSLSTYITPVQVDRSPLQLAVSSGGAAPVLARQIASRLETLLPAAYGRLARLAGRMREQVRVALPDKDWRLRFWEQIFDGAAAESVLAGREAEGEAELLRLLEQEQARPAPQGEVFLVGAGPGDPDLLTFRALRLMQRADVVLYDRLAAPALLDLVRKEAERIPVGKRRGRHTLPQERINERLVELARAGKRVLRLKGGDPFLFGRGGEEIEGLIEQDIPFQVVPGISAAQGAASYAGIPLTHRDYAQTCRLLTGHRRAGHPQMKAHAPYRQDETLIIYMGLVNLEAVCEQLCECGLPPEHPAAVVAQATTPQQRVVLGNLRTLAERVRAERVESPALVVVGPTVQLHPRLGWYRGEAEDRDAAASIDPCWTGGMRD.

Residues 1 to 205 (MHHYPIFLKL…GREAEGEAEL (205 aa)) form a precorrin-2 dehydrogenase /sirohydrochlorin ferrochelatase region. NAD(+) contacts are provided by residues 22-23 (EA) and 43-44 (PV). Ser-130 is modified (phosphoserine). The tract at residues 220–484 (GEVFLVGAGP…DPCWTGGMRD (265 aa)) is uroporphyrinogen-III C-methyltransferase. Residue Pro-229 participates in S-adenosyl-L-methionine binding. The Proton acceptor role is filled by Asp-252. Lys-274 (proton donor) is an active-site residue. Residues 305-307 (GGD), Leu-310, 335-336 (SA), Met-387, and Ala-416 each bind S-adenosyl-L-methionine.

The protein in the N-terminal section; belongs to the precorrin-2 dehydrogenase / sirohydrochlorin ferrochelatase family. In the C-terminal section; belongs to the precorrin methyltransferase family.

It carries out the reaction uroporphyrinogen III + 2 S-adenosyl-L-methionine = precorrin-2 + 2 S-adenosyl-L-homocysteine + H(+). The enzyme catalyses precorrin-2 + NAD(+) = sirohydrochlorin + NADH + 2 H(+). It catalyses the reaction siroheme + 2 H(+) = sirohydrochlorin + Fe(2+). The protein operates within cofactor biosynthesis; adenosylcobalamin biosynthesis; precorrin-2 from uroporphyrinogen III: step 1/1. Its pathway is cofactor biosynthesis; adenosylcobalamin biosynthesis; sirohydrochlorin from precorrin-2: step 1/1. It functions in the pathway porphyrin-containing compound metabolism; siroheme biosynthesis; precorrin-2 from uroporphyrinogen III: step 1/1. It participates in porphyrin-containing compound metabolism; siroheme biosynthesis; siroheme from sirohydrochlorin: step 1/1. The protein operates within porphyrin-containing compound metabolism; siroheme biosynthesis; sirohydrochlorin from precorrin-2: step 1/1. Its function is as follows. Multifunctional enzyme that catalyzes the SAM-dependent methylations of uroporphyrinogen III at position C-2 and C-7 to form precorrin-2 via precorrin-1. Then it catalyzes the NAD-dependent ring dehydrogenation of precorrin-2 to yield sirohydrochlorin. Finally, it catalyzes the ferrochelation of sirohydrochlorin to yield siroheme. The polypeptide is Siroheme synthase 1 (Halorhodospira halophila (strain DSM 244 / SL1) (Ectothiorhodospira halophila (strain DSM 244 / SL1))).